A 703-amino-acid polypeptide reads, in one-letter code: MSIFNKVTKSFQWGQHKVTMETGEMARQAGGAVLLDMDGTVVLATVVAKSDAKPGQDFFPLTVDYLEKTYAAGRIPGSFFKREGRPSEFETLTSRLIDRPIRPLFPEGFFNEVQVVIHVLSLNPEVEGDIPALIASSAALSISGIPFNGPIGAARVAYINGEYVLNPGKTQLQNSTMDLVVAGTEAAVLMVESEAKQLSEEIMLGAIVFGHEQGNIAINAIHELVRDAGKPVWDWKAPAKDEVLIAKVVALAEEKLVAAYQIRNKQARTHATRQVTTWTKMGLKAEGVEFDGVAVEGMLFDIEAKIVRSQILAGDPRIDGRDTRTVRPIEIRNSVLPRTHGSALFTRGETQALVVTTLGTERDAQRIDALSGDYEDRFMLHYNMPPFATGETGRVGSPKRREIGHGRLAKRALIAVLPSKEEFPYTMRVVSEITESNGSSSMASVCGGCLSLMDAGVPMKAHVAGIAMGLIKEDNRFAVLTDILGDEDHLGDMDFKVAGTTFGITALQMDIKIQGITKEIMQVALAQAKEARMHILGKMQEAMGQANAEVSDFAPRLYVMKINPEKIRDVIGKGGAVIRALTEETGTQINIEEDGTITIASNDSAKADEAKRRIAEITAEVEIGKVYEGAITKILDFGALVNLMPGKDGLLHISQIAHERVEKVTDYLSEGQIIKVKVLETDEKGRVKLSMKALLDRPSQHQG.

Mg(2+) contacts are provided by Asp488 and Asp494. One can recognise a KH domain in the interval 555–614 (PRLYVMKINPEKIRDVIGKGGAVIRALTEETGTQINIEEDGTITIASNDSAKADEAKRRI). The S1 motif domain occupies 624-692 (GKVYEGAITK…EKGRVKLSMK (69 aa)).

It belongs to the polyribonucleotide nucleotidyltransferase family. The cofactor is Mg(2+).

It localises to the cytoplasm. It catalyses the reaction RNA(n+1) + phosphate = RNA(n) + a ribonucleoside 5'-diphosphate. Functionally, involved in mRNA degradation. Catalyzes the phosphorolysis of single-stranded polyribonucleotides processively in the 3'- to 5'-direction. This is Polyribonucleotide nucleotidyltransferase from Polaromonas naphthalenivorans (strain CJ2).